The following is a 274-amino-acid chain: MAIVKCKPTSPGRRHVVKVVNPELHKGKPHAPLLEKLSKSGGRNNNGRITTRHIGGGHKQHYRLVDFKRNKDGVAAVVERLEYDPNRSANIALVLYKDGERRYILAPKGLKAGDQIQSGVDAAIKVGNALPMRNIPVGSTVHNVEMKPGKGGQIARSAGAYVQIVARDGSYVTLRLRSGEMRKVPVDCRATLGEVGNAEHMLRVLGKAGAARWRGIRPTVRGTAMNPVDHPHGGGEGKNFGKHPVTPWGVQTKGKKTRSNKRTDKFIVRRRSKK.

Positions 221–274 (RGTAMNPVDHPHGGGEGKNFGKHPVTPWGVQTKGKKTRSNKRTDKFIVRRRSKK) are disordered.

The protein belongs to the universal ribosomal protein uL2 family. In terms of assembly, part of the 50S ribosomal subunit. Forms a bridge to the 30S subunit in the 70S ribosome.

Its function is as follows. One of the primary rRNA binding proteins. Required for association of the 30S and 50S subunits to form the 70S ribosome, for tRNA binding and peptide bond formation. It has been suggested to have peptidyltransferase activity; this is somewhat controversial. Makes several contacts with the 16S rRNA in the 70S ribosome. The chain is Large ribosomal subunit protein uL2 from Serratia proteamaculans (strain 568).